A 332-amino-acid chain; its full sequence is UDP-3-O-acylglucosamine N-acyltransferase (332 aa).

Catalysis depends on histidine 231, which acts as the Proton acceptor.

It belongs to the transferase hexapeptide repeat family. LpxD subfamily. Homotrimer.

It catalyses the reaction a UDP-3-O-[(3R)-3-hydroxyacyl]-alpha-D-glucosamine + a (3R)-hydroxyacyl-[ACP] = a UDP-2-N,3-O-bis[(3R)-3-hydroxyacyl]-alpha-D-glucosamine + holo-[ACP] + H(+). It functions in the pathway bacterial outer membrane biogenesis; LPS lipid A biosynthesis. In terms of biological role, catalyzes the N-acylation of UDP-3-O-acylglucosamine using 3-hydroxyacyl-ACP as the acyl donor. Is involved in the biosynthesis of lipid A, a phosphorylated glycolipid that anchors the lipopolysaccharide to the outer membrane of the cell. The sequence is that of UDP-3-O-acylglucosamine N-acyltransferase from Ruthia magnifica subsp. Calyptogena magnifica.